The following is a 117-amino-acid chain: cAMP-regulated phosphoprotein 19-A (117 aa).

Positions 1–37 are enriched in basic and acidic residues; it reads MSGENQETKAQEESSALEQKEIDDKVVSPEKSEEIKL. Residues 1 to 54 are disordered; it reads MSGENQETKAQEESSALEQKEIDDKVVSPEKSEEIKLKARYPNLGPKPGGSDFL. At Ser-28 the chain carries Phosphoserine; by CDK2. Phosphoserine; by GWL is present on Ser-67. Positions 78–117 are disordered; it reads KNKQLPTAASDKTEVTGDHIPTPQDLPQRKPSLVASKLAG. Thr-99 bears the Phosphothreonine; by CDK2 mark. Ser-109 is subject to Phosphoserine; by PKA.

The protein belongs to the endosulfine family. As to quaternary structure, interacts (when phosphorylated at Ser-67) with ppp2r2d. Post-translationally, phosphorylation at Ser-67 by gwl during mitosis is essential for interaction with ppp2r2d (PR55-delta) and subsequent inactivation of PP2A. Phosphorylated by PKA.

Its subcellular location is the cytoplasm. Protein phosphatase inhibitor that specifically inhibits protein phosphatase 2A (PP2A) during mitosis. When phosphorylated at Ser-67 during mitosis, specifically interacts with ppp2r2d (PR55-delta) and inhibits its activity, leading to inactivation of PP2A, an essential condition to keep cyclin-B1-CDK1 activity high during M phase. The chain is cAMP-regulated phosphoprotein 19-A (arpp19-a) from Xenopus laevis (African clawed frog).